Consider the following 207-residue polypeptide: MDTLIKEFDVALRAIAGATRSARANPADRLAPDTEQMSAEERRHVAGLMRINHVGEVCAQALYQAQKLTARNGAVRAQMDAAAREEEDHLAWCAERLRELGSRPSLLNPLWYAGAFAIGWVAGRAGDRVSLGFVAETERQVEHHLGGHLDRLPESDSRSRAILEQMRDDEIRHGDAAREAGGMPLPAPVRALMRGASRVMTTAAYRI.

Positions 56, 86, 89, 138, 170, and 173 each coordinate Fe cation.

It belongs to the COQ7 family. Requires Fe cation as cofactor.

Its subcellular location is the cell membrane. The catalysed reaction is a 5-methoxy-2-methyl-3-(all-trans-polyprenyl)benzene-1,4-diol + AH2 + O2 = a 3-demethylubiquinol + A + H2O. Its pathway is cofactor biosynthesis; ubiquinone biosynthesis. In terms of biological role, catalyzes the hydroxylation of 2-nonaprenyl-3-methyl-6-methoxy-1,4-benzoquinol during ubiquinone biosynthesis. The chain is 3-demethoxyubiquinol 3-hydroxylase from Cupriavidus taiwanensis (strain DSM 17343 / BCRC 17206 / CCUG 44338 / CIP 107171 / LMG 19424 / R1) (Ralstonia taiwanensis (strain LMG 19424)).